Reading from the N-terminus, the 347-residue chain is MRGFILALVLALVGAQKHDLEPVFSTGKTYLYDYKGLILHGLPGKGLAAAGLKLTCRLEISRVSRSDHLLQIENVFKVANKTRHHKKWIHSRVKAAVTDLWEEPSATPLSSSSSTDSSAEGEEPGNKRDKDEIWQFGKKYGADSSSSSSSSSTGSGSSKTCSSSREDSSRDKHCSVDSEYFNQQADLPIYQFWFKPADEQDPRRKVQNSSISSSSSSSSDEGISTPVSQPMFLGDSKPPVLAAVLRAIRRNEQPTGYQLVLYTDRQASRLRVQVFVSSITESDRWKLCADASVVNSHKASGTLKWGKDCQDYQVATQIATGQFAAHPAIQVKLEWSEVPSSVRKTAR.

The first 15 residues, 1-15 (MRGFILALVLALVGA), serve as a signal peptide directing secretion. Residue asparagine 80 is glycosylated (N-linked (GlcNAc...) asparagine). Low complexity predominate over residues 104-118 (PSATPLSSSSSTDSS). Disordered stretches follow at residues 104 to 174 (PSAT…DKHC) and 200 to 234 (QDPR…MFLG). The span at 124–133 (PGNKRDKDEI) shows a compositional bias: basic and acidic residues. A compositionally biased stretch (low complexity) spans 144–163 (SSSSSSSSSTGSGSSKTCSS). Positions 164-174 (SREDSSRDKHC) are enriched in basic and acidic residues. A glycan (N-linked (GlcNAc...) asparagine) is linked at asparagine 208. The span at 209 to 219 (SSISSSSSSSS) shows a compositional bias: low complexity.

Post-translationally, phosvitin, an egg yolk storage protein, is one of the most highly phosphorylated (10%) proteins in nature. In terms of processing, cathepsin D is responsible for intraoocytic processing of vitellogenin. May contain intrachain disulfide bonds. As to expression, produced by the liver, secreted into the blood and then sequestered by receptor mediated endocytosis into growing oocytes, where it is generally cleaved, giving rise to the respective yolk components.

Its function is as follows. Precursor of the egg-yolk proteins that are sources of nutrients during early development of oviparous organisms. In terms of biological role, phosvitin is believed to be of importance in sequestering calcium, iron and other cations for the developing embryo. This Gallus gallus (Chicken) protein is Vitellogenin-3 (VTG3).